An 867-amino-acid chain; its full sequence is Alanine--tRNA ligase (867 aa).

The Zn(2+) site is built by His556, His560, Cys658, and His662.

The protein belongs to the class-II aminoacyl-tRNA synthetase family. Zn(2+) is required as a cofactor.

Its subcellular location is the cytoplasm. It catalyses the reaction tRNA(Ala) + L-alanine + ATP = L-alanyl-tRNA(Ala) + AMP + diphosphate. Catalyzes the attachment of alanine to tRNA(Ala) in a two-step reaction: alanine is first activated by ATP to form Ala-AMP and then transferred to the acceptor end of tRNA(Ala). Also edits incorrectly charged Ser-tRNA(Ala) and Gly-tRNA(Ala) via its editing domain. The chain is Alanine--tRNA ligase from Fusobacterium nucleatum subsp. nucleatum (strain ATCC 25586 / DSM 15643 / BCRC 10681 / CIP 101130 / JCM 8532 / KCTC 2640 / LMG 13131 / VPI 4355).